Consider the following 159-residue polypeptide: Transmembrane protein 42 (159 aa).

A run of 4 helical transmembrane segments spans residues 37–57 (FWGVFNCLCAGAFGALAAASA), 68–88 (GFCVLGIIMMATTNSLMWTFF), 100–120 (IASVTVTFSNILNSAFLGFVL), and 124–144 (CQEVLWWGGVFLILCGLTLIH).

The protein localises to the membrane. The protein is Transmembrane protein 42 (TMEM42) of Bos taurus (Bovine).